Consider the following 216-residue polypeptide: MKTGILGGTFNPVHVAHLRIAEEVRDTFALDRVLFIPAASPPHKAMEGEVPFETRCAMVRLATADNHAFAVSDMEGGRPGKSYSVDTIRALKEEYPGDEFFFIIGSDSFLDIGSWYDYEAIFASCNLVVAARPGAEAADLLAALPVAITAQFCYYPAEKRLAHRSGYSVYWLAGVPLDISSRSIRGLARLGRSIRYLVPEAVERYINEQRIYAHDG.

The protein belongs to the NadD family.

The catalysed reaction is nicotinate beta-D-ribonucleotide + ATP + H(+) = deamido-NAD(+) + diphosphate. The protein operates within cofactor biosynthesis; NAD(+) biosynthesis; deamido-NAD(+) from nicotinate D-ribonucleotide: step 1/1. Its function is as follows. Catalyzes the reversible adenylation of nicotinate mononucleotide (NaMN) to nicotinic acid adenine dinucleotide (NaAD). The protein is Probable nicotinate-nucleotide adenylyltransferase of Geobacter sulfurreducens (strain ATCC 51573 / DSM 12127 / PCA).